The chain runs to 786 residues: m7GpppN-mRNA hydrolase dcap-2 (786 aa).

Positions 25–61 are enriched in polar residues; it reads QKQNKSTEEPPSSVQKLLASLQQAQNKSDLSEQPSTS. Residues 25–148 are disordered; sequence QKQNKSTEEP…QQQQQYKGPR (124 aa). Positions 62-72 are enriched in basic residues; the sequence is KPKKNEKRKKA. Composition is skewed to polar residues over residues 101–111 and 118–133; these read MQQQAENARIS and QVSTSKGSSRNTTAPE. Over residues 134–144 the composition is skewed to low complexity; the sequence is QQNYQQQQQQY. Residues 238–366 form the Nudix hydrolase domain; it reads STVPTYGAIL…LPAYLQGNKF (129 aa). The Nudix box signature appears at 273–294; that stretch reads GKINQAEPPRDAAIRETFEETG. Mg(2+) is bound by residues Glu288 and Glu292. 2 disordered regions span residues 556-576 and 623-655; these read IMHSPNHPLPPTSNSPATPTA and ISSTQKQSIPKATAAPPSTEKTRSASLSGSSQV. Composition is skewed to polar residues over residues 623-632 and 646-655; these read ISSTQKQSIP and SASLSGSSQV.

Belongs to the Nudix hydrolase family. DCP2 subfamily. In terms of assembly, may be a component of the decapping complex composed of dcap-1 and dcap-2. Mg(2+) is required as a cofactor. It depends on Mn(2+) as a cofactor. As to expression, expressed in sensory neurons.

Its subcellular location is the cytoplasmic granule. The protein localises to the cytoplasm. It localises to the perinuclear region. The enzyme catalyses a 5'-end (N(7)-methyl 5'-triphosphoguanosine)-ribonucleoside in mRNA + H2O = N(7)-methyl-GDP + a 5'-end phospho-ribonucleoside in mRNA + 2 H(+). The catalysed reaction is a 5'-end (N(2),N(2),N(7)-trimethyl 5'-triphosphoguanosine)-ribonucleoside in mRNA + H2O = N(2),N(2),N(7)-trimethyl-GDP + a 5'-end phospho-ribonucleoside in mRNA + 2 H(+). With respect to regulation, inhibited by capped and uncapped RNA. Not inhibited by dinucleotide cap or methylated nucleotide analogs. Its function is as follows. Decapping metalloenzyme that catalyzes the cleavage of the cap structure on mRNAs. Removes the 7-methyl guanine cap structure from mRNA molecules, yielding a 5'-phosphorylated mRNA fragment and 7m-GDP. RNA-decapping enzyme although it does not bind the RNA cap. May contribute to gene regulation in multiple RNA pathways including monomethylguanosine- and trimethylguanosine-capped RNAs. In oocytes, may play a role in the response to stress induced by heat shock, osmotic stress and anoxia. Required for the developmental axon guidance and regrowth of PLM touch receptor neurons. Early in embryogenesis, plays a role in ciliary shape formation in sensory neurons. Promotes survival at high temperatures. The chain is m7GpppN-mRNA hydrolase dcap-2 from Caenorhabditis elegans.